Reading from the N-terminus, the 206-residue chain is 3-demethoxyubiquinol 3-hydroxylase (206 aa).

Residues Glu-55, Glu-85, His-88, Glu-137, Glu-169, and His-172 each coordinate Fe cation.

The protein belongs to the COQ7 family. Fe cation serves as cofactor.

It is found in the cell membrane. It carries out the reaction a 5-methoxy-2-methyl-3-(all-trans-polyprenyl)benzene-1,4-diol + AH2 + O2 = a 3-demethylubiquinol + A + H2O. It functions in the pathway cofactor biosynthesis; ubiquinone biosynthesis. Functionally, catalyzes the hydroxylation of 2-nonaprenyl-3-methyl-6-methoxy-1,4-benzoquinol during ubiquinone biosynthesis. This Azoarcus sp. (strain BH72) protein is 3-demethoxyubiquinol 3-hydroxylase.